A 977-amino-acid polypeptide reads, in one-letter code: Ephrin type-A receptor 2 (977 aa).

Positions 1–25 (MELRAVGFCLALLWGCALAAAAAQG) are cleaved as a signal peptide. The mediates interaction with CLDN4 stretch occupies residues 1-205 (MELRAVGFCL…YYKKCPEMLQ (205 aa)). Topologically, residues 26–538 (KEVVLLDFAA…STEGSANMAV (513 aa)) are extracellular. The Eph LBD domain occupies 27 to 205 (EVVLLDFAAM…YYKKCPEMLQ (179 aa)). Intrachain disulfides connect C69/C187 and C104/C114. A Fibronectin type-III 1 domain is found at 329 to 433 (PPSAPNYLTA…TSRSFRTASV (105 aa)). N408 and N436 each carry an N-linked (GlcNAc...) asparagine glycan. Residues 439–530 (EPPKVRLEDR…KVHEFQTLST (92 aa)) form the Fibronectin type-III 2 domain. The helical transmembrane segment at 539–559 (IGGVAVGVVLLLVLAGVGLFI) threads the bilayer. Over 560-977 (HRRRRNLRAR…DQVNTVGIPI (418 aa)) the chain is Cytoplasmic. S571 and S580 each carry phosphoserine. 2 positions are modified to phosphotyrosine; by autocatalysis: Y589 and Y595. The mediates interaction with ARHGEF16 stretch occupies residues 607–907 (TEIHPSCVAR…STSGSEGVPF (301 aa)). The Protein kinase domain maps to 614–876 (VARQKVIGAG…DIVSILDKLI (263 aa)). ATP is bound at residue 620-628 (IGAGEFGEV). Phosphotyrosine is present on Y629. Residue K647 coordinates ATP. T648 bears the Phosphothreonine mark. Residue Y736 is modified to Phosphotyrosine; by autocatalysis. The active-site Proton acceptor is D740. A Phosphotyrosine; by autocatalysis modification is found at Y773. Phosphoserine occurs at positions 870, 893, 898, and 902. Residues 887–977 (DFDPRVSIRL…DQVNTVGIPI (91 aa)) form a negatively regulates interaction with ARHGEF16 region. Residues 905-969 (VPFRTVSEWL…AYSLLGLKDQ (65 aa)) form the SAM domain. Y922 carries the phosphotyrosine; by autocatalysis modification. Phosphotyrosine is present on Y931. The PDZ-binding motif lies at 975-977 (IPI).

The protein belongs to the protein kinase superfamily. Tyr protein kinase family. Ephrin receptor subfamily. As to quaternary structure, homodimer. Interacts with INPPL1; regulates activated EPHA2 endocytosis and degradation. Interacts (inactivated form) with PTK2/FAK1 and interacts (EFNA1 ligand-activated form) with PTPN11; regulates integrin-mediated adhesion. Interacts with ARHGEF16, DOCK4 and ELMO2; mediates ligand-independent activation of RAC1 which stimulates cell migration. Interacts with CLDN4; phosphorylates CLDN4 and may regulate tight junctions. Interacts with ACP1. Interacts with CEMIP. Interacts with NCK1; may regulate EPHA2 activity in cell migration and adhesion. Interacts with SLA. Interacts (phosphorylated form) with VAV2, VAV3 and PI3-kinase p85 subunit (PIK3R1, PIK3R2 or PIK3R3); critical for the EFNA1-induced activation of RAC1 which stimulates cell migration. Interacts with ANKS1A. Interacts with TIMD4. Post-translationally, autophosphorylates. Phosphorylated at Ser-898 by PKB; serum-induced phosphorylation which targets EPHA2 to the cell leading edge and stimulates cell migration. Phosphorylation by PKB is inhibited by EFNA1-activated EPHA2 which regulates PKB activity via a reciprocal regulatory loop. Phosphorylated on tyrosine upon binding and activation by EFNA1. Phosphorylated residues Tyr-589 and Tyr-595 are required for binding VAV2 and VAV3 while phosphorylated residues Tyr-736 and Tyr-931 are required for binding PI3-kinase p85 subunit (PIK3R1, PIK3R2 or PIK3R3). These phosphorylated residues are critical for recruitment of VAV2 and VAV3 and PI3-kinase p85 subunit which transduce downstream signaling to activate RAC1 GTPase and cell migration. Dephosphorylation of Tyr-931 by PTPRF prevents the interaction of EPHA2 with NCK1. Phosphorylated at Ser-898 in response to TNF by RPS6KA1 and RPS6KA3; RPS6KA-EPHA2 signaling pathway controls cell migration. Phosphorylated at Ser-898 by PKA; blocks cell retraction induced by EPHA2 kinase activity. Dephosphorylated by ACP1. Ubiquitinated by CHIP/STUB1. Ubiquitination is regulated by the HSP90 chaperone and regulates the receptor stability and activity through proteasomal degradation. ANKS1A prevents ubiquitination and degradation. In terms of tissue distribution, expressed in the lung, intestine and liver. Expressed in myogenic progenitor cells.

The protein resides in the cell membrane. It localises to the cell projection. It is found in the ruffle membrane. The protein localises to the lamellipodium membrane. Its subcellular location is the cell junction. The protein resides in the focal adhesion. The catalysed reaction is L-tyrosyl-[protein] + ATP = O-phospho-L-tyrosyl-[protein] + ADP + H(+). Functionally, receptor tyrosine kinase which binds promiscuously membrane-bound ephrin-A family ligands residing on adjacent cells, leading to contact-dependent bidirectional signaling into neighboring cells. The signaling pathway downstream of the receptor is referred to as forward signaling while the signaling pathway downstream of the ephrin ligand is referred to as reverse signaling. Activated by the ligand ephrin-A1/EFNA1 regulates migration, integrin-mediated adhesion, proliferation and differentiation of cells. Regulates cell adhesion and differentiation through DSG1/desmoglein-1 and inhibition of the ERK1/ERK2 signaling pathway. May also participate in UV radiation-induced apoptosis and have a ligand-independent stimulatory effect on chemotactic cell migration. During development, may function in distinctive aspects of pattern formation and subsequently in development of several fetal tissues. Involved for instance in angiogenesis, in early hindbrain development and epithelial proliferation and branching morphogenesis during mammary gland development. Engaged by the ligand ephrin-A5/EFNA5 may regulate lens fiber cells shape and interactions and be important for lens transparency development and maintenance. With ephrin-A2/EFNA2 may play a role in bone remodeling through regulation of osteoclastogenesis and osteoblastogenesis. In Mus musculus (Mouse), this protein is Ephrin type-A receptor 2 (Epha2).